The sequence spans 101 residues: uncharacterized protein (101 aa).

Residues 68–90 (LAFAFCGRANTFISCFISFASLI) traverse the membrane as a helical segment.

Its subcellular location is the membrane. This is an uncharacterized protein from Saccharomyces cerevisiae (strain ATCC 204508 / S288c) (Baker's yeast).